The sequence spans 479 residues: Ribosomal RNA small subunit methyltransferase F (479 aa).

S-adenosyl-L-methionine contacts are provided by residues 125–131, Glu-149, Asp-176, and Asp-194; that span reads AAAPGSK. Catalysis depends on Cys-247, which acts as the Nucleophile.

The protein belongs to the class I-like SAM-binding methyltransferase superfamily. RsmB/NOP family.

It localises to the cytoplasm. The catalysed reaction is cytidine(1407) in 16S rRNA + S-adenosyl-L-methionine = 5-methylcytidine(1407) in 16S rRNA + S-adenosyl-L-homocysteine + H(+). Functionally, specifically methylates the cytosine at position 1407 (m5C1407) of 16S rRNA. The sequence is that of Ribosomal RNA small subunit methyltransferase F from Salmonella paratyphi A (strain ATCC 9150 / SARB42).